A 509-amino-acid chain; its full sequence is Tyrosine-protein kinase STK (509 aa).

Polar residues predominate over residues methionine 1–proline 16. The tract at residues methionine 1–aspartate 23 is disordered. The N-myristoyl glycine moiety is linked to residue glycine 2. The 62-residue stretch at proline 59–serine 120 folds into the SH3 domain. In terms of domain architecture, SH2 spans tryptophan 126–cysteine 218. A Protein kinase domain is found at leucine 240–valine 495. ATP-binding positions include leucine 246–valine 254 and lysine 268. The Proton acceptor role is filled by aspartate 360. At tyrosine 390 the chain carries Phosphotyrosine; by autocatalysis.

It belongs to the protein kinase superfamily. Tyr protein kinase family. SRC subfamily.

It carries out the reaction L-tyrosyl-[protein] + ATP = O-phospho-L-tyrosyl-[protein] + ADP + H(+). The protein is Tyrosine-protein kinase STK (STK) of Hydra vulgaris (Hydra).